A 426-amino-acid polypeptide reads, in one-letter code: Serine--tRNA ligase (426 aa).

Positions 36–66 (KRKHLQERTQDLQSQRNTISKEIGQKKAKGE) are disordered. Over residues 46–55 (DLQSQRNTIS) the composition is skewed to polar residues. 233 to 235 (TAE) is a binding site for L-serine. 264 to 266 (RSE) provides a ligand contact to ATP. L-serine is bound at residue glutamate 287. 351 to 354 (EISS) contributes to the ATP binding site. Serine 387 contacts L-serine.

This sequence belongs to the class-II aminoacyl-tRNA synthetase family. Type-1 seryl-tRNA synthetase subfamily. As to quaternary structure, homodimer. The tRNA molecule binds across the dimer.

The protein resides in the cytoplasm. The enzyme catalyses tRNA(Ser) + L-serine + ATP = L-seryl-tRNA(Ser) + AMP + diphosphate + H(+). It carries out the reaction tRNA(Sec) + L-serine + ATP = L-seryl-tRNA(Sec) + AMP + diphosphate + H(+). It functions in the pathway aminoacyl-tRNA biosynthesis; selenocysteinyl-tRNA(Sec) biosynthesis; L-seryl-tRNA(Sec) from L-serine and tRNA(Sec): step 1/1. In terms of biological role, catalyzes the attachment of serine to tRNA(Ser). Is also able to aminoacylate tRNA(Sec) with serine, to form the misacylated tRNA L-seryl-tRNA(Sec), which will be further converted into selenocysteinyl-tRNA(Sec). In Francisella tularensis subsp. tularensis (strain FSC 198), this protein is Serine--tRNA ligase.